Reading from the N-terminus, the 124-residue chain is MDTMGRHVISELWGCDFDKLNDIEFIEKTFVDAALKSGAEIREVAFHKFAPQGVSGVVIISESHLTIHTFPEHGYASIDVYTCGHLDPTIAADYIADKLGAQTRETIELPRGMRPIEVKKAQAL.

The active-site Schiff-base intermediate with substrate; via pyruvic acid is S63. Residue S63 is modified to Pyruvic acid (Ser); by autocatalysis. H68 acts as the Proton acceptor; for processing activity in catalysis. The Proton donor; for catalytic activity role is filled by C83.

The protein belongs to the prokaryotic AdoMetDC family. Type 1 subfamily. Heterotetramer of two alpha and two beta chains arranged as a dimer of alpha/beta heterodimers. Pyruvate serves as cofactor. Post-translationally, is synthesized initially as an inactive proenzyme. Formation of the active enzyme involves a self-maturation process in which the active site pyruvoyl group is generated from an internal serine residue via an autocatalytic post-translational modification. Two non-identical subunits are generated from the proenzyme in this reaction, and the pyruvate is formed at the N-terminus of the alpha chain, which is derived from the carboxyl end of the proenzyme. The post-translation cleavage follows an unusual pathway, termed non-hydrolytic serinolysis, in which the side chain hydroxyl group of the serine supplies its oxygen atom to form the C-terminus of the beta chain, while the remainder of the serine residue undergoes an oxidative deamination to produce ammonia and the pyruvoyl group blocking the N-terminus of the alpha chain.

It carries out the reaction S-adenosyl-L-methionine + H(+) = S-adenosyl 3-(methylsulfanyl)propylamine + CO2. Its pathway is amine and polyamine biosynthesis; S-adenosylmethioninamine biosynthesis; S-adenosylmethioninamine from S-adenosyl-L-methionine: step 1/1. Catalyzes the decarboxylation of S-adenosylmethionine to S-adenosylmethioninamine (dcAdoMet), the propylamine donor required for the synthesis of the polyamines spermine and spermidine from the diamine putrescine. The chain is S-adenosylmethionine decarboxylase proenzyme from Geobacillus sp. (strain WCH70).